The sequence spans 360 residues: Ferrochelatase (360 aa).

Fe cation contacts are provided by His210 and Glu291.

The protein belongs to the ferrochelatase family.

It is found in the cytoplasm. It carries out the reaction heme b + 2 H(+) = protoporphyrin IX + Fe(2+). The protein operates within porphyrin-containing compound metabolism; protoheme biosynthesis; protoheme from protoporphyrin-IX: step 1/1. Its function is as follows. Catalyzes the ferrous insertion into protoporphyrin IX. This chain is Ferrochelatase, found in Pseudoalteromonas atlantica (strain T6c / ATCC BAA-1087).